The sequence spans 142 residues: MTSRRTRARERALQALYQIDVAAEGIDDALSRFWKSFEPVEREVMDLAEGLVRGVAQHRRAVDEAIEAVSTNWRLDRMAKVDRNVLRLAVFELLRTDVPVKVVINEAIELGKKYGSESSGAFVNGVLDKVASGLPPARRGER.

This sequence belongs to the NusB family.

In terms of biological role, involved in transcription antitermination. Required for transcription of ribosomal RNA (rRNA) genes. Binds specifically to the boxA antiterminator sequence of the ribosomal RNA (rrn) operons. The chain is Transcription antitermination protein NusB from Anaeromyxobacter dehalogenans (strain 2CP-1 / ATCC BAA-258).